The chain runs to 284 residues: Shikimate dehydrogenase (NADP(+)) (284 aa).

Shikimate is bound by residues 20 to 22 (SIS) and Ser-67. Lys-71 functions as the Proton acceptor in the catalytic mechanism. Positions 92 and 107 each coordinate shikimate. NADP(+) contacts are provided by residues 129–133 (GAGGA) and Val-227. Tyr-229 provides a ligand contact to shikimate. Gly-250 lines the NADP(+) pocket.

Belongs to the shikimate dehydrogenase family. Homodimer.

The catalysed reaction is shikimate + NADP(+) = 3-dehydroshikimate + NADPH + H(+). It participates in metabolic intermediate biosynthesis; chorismate biosynthesis; chorismate from D-erythrose 4-phosphate and phosphoenolpyruvate: step 4/7. Its function is as follows. Involved in the biosynthesis of the chorismate, which leads to the biosynthesis of aromatic amino acids. Catalyzes the reversible NADPH linked reduction of 3-dehydroshikimate (DHSA) to yield shikimate (SA). This Streptococcus sanguinis (strain SK36) protein is Shikimate dehydrogenase (NADP(+)).